We begin with the raw amino-acid sequence, 561 residues long: MAIATSTQLARALYDNTAESPQELSFRRGDVLRVLQREGAGGLDGWCLCSLHGQQGIVPANRVKLLPAGPAPKPSLSPASPAQPGSPYPAPDHSNEDQEVYVVPPPARPCPTSGPPAGPCPPSPDLIYKIPRASGTQLAAPRDALEVYDVPPTALRVPSSGPYDCPASFSHPLTRVAPQPPGEDDAPYDVPLTPKPPAELEPDLEWEGGREPGPPIYAAPSNLKRASALLNLYEAPEELLADGEGGGTDEGIYDVPLLGPEAPPSPEPPGALASHDQDTLAQLLARSPPPPHRPRLPSAESLSRRPLPALPVPEAPSPSPVPSPAPGRKGSIQDRPLPPPPPRLPGYGGPKVEGDPEGREMEDDPAGHHNEYEGIPMAEEYDYVHLKGMDKAQGSRPPDQACTGDPELPERGMPAPQEALSPGEPLVVSTGDLQLLYFYAGQCQSHYSALQAAVAALMSSTQANQPPRLFVPHSKRVVVAAHRLVFVGDTLGRLAASAPLRAQVRAAGTALGQALRATVLAVKGAALGYPSSPAIQEMVQCVTELAGQALQFTTLLTSLAP.

Residues 5 to 68 enclose the SH3 domain; that stretch reads TSTQLARALY…PANRVKLLPA (64 aa). 4 disordered regions span residues 68-123, 171-215, 240-372, and 390-422; these read AGPA…CPPS, HPLT…PGPP, LADG…HNEY, and DKAQ…ALSP. Positions 103-123 are enriched in pro residues; sequence VPPPARPCPTSGPPAGPCPPS. Tyr-253 is subject to Phosphotyrosine; by SRC. 2 consecutive short sequence motifs (SH3-binding) follow at residues 305-311 and 335-341; these read RPLPALP and RPLPPPP. The span at 308 to 325 shows a compositional bias: pro residues; sequence PALPVPEAPSPSPVPSPA. The segment covering 352–372 has biased composition (basic and acidic residues); it reads VEGDPEGREMEDDPAGHHNEY. The segment at 438–488 is divergent helix-loop-helix motif; that stretch reads FYAGQCQSHYSALQAAVAALMSSTQANQPPRLFVPHSKRVVVAAHRLVFVG.

Belongs to the CAS family. Phosphorylated on multiple tyrosine residues. Phosphorylated on tyrosines by FYN and SRC. The protein has been detected in lung and placenta.

Functionally, docking protein which plays a central coordinating role for tyrosine-kinase-based signaling related to cell adhesion. May serve as an activator of SRC and a downstream effector. Interacts with the SH3 domain of FYN and with CRK, SRC, and YES. The chain is Embryonal Fyn-associated substrate (EFS) from Homo sapiens (Human).